The primary structure comprises 513 residues: Trigger factor (513 aa).

Residues 164 to 249 (GDQIIIDFLG…VKAVKNAGEF (86 aa)) enclose the PPIase FKBP-type domain. The disordered stretch occupies residues 436-513 (QAAIEAEEGA…KAPAKKKAEG (78 aa)). The span at 452–461 (AKKAPAKKKA) shows a compositional bias: basic residues. Low complexity predominate over residues 489-498 (ADEAPAAEEA). Residues 501–513 (AKKKAPAKKKAEG) show a composition bias toward basic residues.

Belongs to the FKBP-type PPIase family. Tig subfamily.

It localises to the cytoplasm. It carries out the reaction [protein]-peptidylproline (omega=180) = [protein]-peptidylproline (omega=0). Functionally, involved in protein export. Acts as a chaperone by maintaining the newly synthesized protein in an open conformation. Functions as a peptidyl-prolyl cis-trans isomerase. The chain is Trigger factor from Novosphingobium aromaticivorans (strain ATCC 700278 / DSM 12444 / CCUG 56034 / CIP 105152 / NBRC 16084 / F199).